Here is a 108-residue protein sequence, read N- to C-terminus: Phosphoribosyl-ATP pyrophosphatase (108 aa).

This sequence belongs to the PRA-PH family.

The protein localises to the cytoplasm. The enzyme catalyses 1-(5-phospho-beta-D-ribosyl)-ATP + H2O = 1-(5-phospho-beta-D-ribosyl)-5'-AMP + diphosphate + H(+). It participates in amino-acid biosynthesis; L-histidine biosynthesis; L-histidine from 5-phospho-alpha-D-ribose 1-diphosphate: step 2/9. The polypeptide is Phosphoribosyl-ATP pyrophosphatase (Thiobacillus denitrificans (strain ATCC 25259 / T1)).